The primary structure comprises 245 residues: MECVMKYKRILLKLSGEGLSNKKKSLLIDYEIVKNIAIQLQKIHKQGYEVAIVVGGGNFWRGESASKNGIPRTRADYIGMLATTMNALALQSGFESVGLKARVQSSLSIDGKVAENYITEKAKHYLSNGEIVIFAGGTGRPFFTTDTAATLVASEMQCDVLLMAKNGVNGVYDADPKVSPSAIKFDSLSYDELLHIVLTNGLKIMDSTSVTMAKENNIKILVFDIQEKDSILKVLEGNAEHTKVE.

Residue 13-16 coordinates ATP; that stretch reads KLSG. G56 is a UMP binding site. G57 and R61 together coordinate ATP. UMP contacts are provided by residues D76 and 138 to 145; that span reads TGRPFFTT. The ATP site is built by N166, Y172, and D175.

The protein belongs to the UMP kinase family. In terms of assembly, homohexamer.

The protein localises to the cytoplasm. It carries out the reaction UMP + ATP = UDP + ADP. It functions in the pathway pyrimidine metabolism; CTP biosynthesis via de novo pathway; UDP from UMP (UMPK route): step 1/1. Inhibited by UTP. In terms of biological role, catalyzes the reversible phosphorylation of UMP to UDP. The polypeptide is Uridylate kinase (Mycoplasma mobile (strain ATCC 43663 / 163K / NCTC 11711) (Mesomycoplasma mobile)).